Consider the following 448-residue polypeptide: Mitochondrial distribution and morphology protein 10 (448 aa).

Disordered regions lie at residues 101 to 126 and 366 to 386; these read QIHP…SEKA and PPLP…PAGE. Residues 112-126 are compositionally biased toward basic and acidic residues; that stretch reads NESRHAEPNERSEKA.

The protein belongs to the MDM10 family. As to quaternary structure, component of the ER-mitochondria encounter structure (ERMES) or MDM complex, composed of MMM1, MDM10, MDM12 and MDM34. Associates with the mitochondrial outer membrane sorting assembly machinery SAM(core) complex.

The protein resides in the mitochondrion outer membrane. Component of the ERMES/MDM complex, which serves as a molecular tether to connect the endoplasmic reticulum and mitochondria. Components of this complex are involved in the control of mitochondrial shape and protein biogenesis and may function in phospholipid exchange. MDM10 is involved in the late assembly steps of the general translocase of the mitochondrial outer membrane (TOM complex). Functions in the TOM40-specific route of the assembly of outer membrane beta-barrel proteins, including the association of TOM40 with the receptor TOM22 and small TOM proteins. Can associate with the SAM(core) complex as well as the MDM12-MMM1 complex, both involved in late steps of the major beta-barrel assembly pathway, that is responsible for biogenesis of all outer membrane beta-barrel proteins. May act as a switch that shuttles between both complexes and channels precursor proteins into the TOM40-specific pathway. Plays a role in mitochondrial morphology and in the inheritance of mitochondria. The protein is Mitochondrial distribution and morphology protein 10 of Coccidioides immitis (strain RS) (Valley fever fungus).